Here is a 522-residue protein sequence, read N- to C-terminus: Cytochrome bd-I ubiquinol oxidase subunit 1 (522 aa).

The residue at position 1 (Met-1) is an N-formylmethionine. The Cytoplasmic portion of the chain corresponds to 1–22 (MLDIVELSRLQFALTAMYHFLF). His-19 provides a ligand contact to heme b. Residues 23–42 (VPLTLGMAFLLAIMETVYVL) form a helical membrane-spanning segment. Residues 43–94 (SGKQIYKDMTKFWGKLFGINFALGVATGLTMEFQFGTNWSYYSHYVGDIFGA) lie on the Periplasmic side of the membrane. The helical transmembrane segment at 95–114 (PLAIEGLMAFFLESTFVGLF) threads the bilayer. Over 115–129 (FFGWDRLGKVQHMCV) the chain is Cytoplasmic. The chain crosses the membrane as a helical span at residues 130–149 (TWLVALGSNLSALWILVANG). Residues 150–187 (WMQNPIASDFNFETMRMEMVSFSELVLNPVAQVKFVHT) lie on the Periplasmic side of the membrane. His-186 contributes to the heme b binding site. The helical transmembrane segment at 188–207 (VASGYVTGAMFILGISAWYM) threads the bilayer. Residues 208 to 219 (LKGRDFAFAKRS) are Cytoplasmic-facing. Residues 220 to 239 (FAIAASFGMAAVLSVIVLGD) form a helical membrane-spanning segment. Residues 240–392 (ESGYEMGDVQ…VAPLYFAFRI (153 aa)) are Periplasmic-facing. Met-393 serves as a coordination point for heme b. The helical transmembrane segment at 393–412 (MVACGFLLLAIIALSFWSVI) threads the bilayer. The Cytoplasmic portion of the chain corresponds to 413–470 (RNRIGEKKWLLRAALYGIPLPWIAVEAGWFVAEYGRQPWAIGEVLPTAVANSSLTAGD). A helical membrane pass occupies residues 471–490 (LIFSMVLICGLYTLFLVAEL). At 491–522 (FLMFKFARLGPSSLKTGRYHFEQSSTTTQPAR) the chain is on the periplasmic side.

It belongs to the cytochrome ubiquinol oxidase subunit 1 family. Heterodimer of subunits I and II. Heme b is required as a cofactor. Heme d cis-diol serves as cofactor.

The protein localises to the cell inner membrane. It catalyses the reaction 2 a ubiquinol + O2(in) + 4 H(+)(in) = 2 a ubiquinone + 2 H2O(in) + 4 H(+)(out). It participates in energy metabolism; oxidative phosphorylation. A terminal oxidase that produces a proton motive force by the vectorial transfer of protons across the inner membrane. It is the component of the aerobic respiratory chain of E.coli that predominates when cells are grown at low aeration. Generates a proton motive force using protons and electrons from opposite sides of the membrane to generate H(2)O, transferring 1 proton/electron. The chain is Cytochrome bd-I ubiquinol oxidase subunit 1 (cydA) from Escherichia coli O6:H1 (strain CFT073 / ATCC 700928 / UPEC).